A 310-amino-acid polypeptide reads, in one-letter code: Biotin synthase (310 aa).

In terms of domain architecture, Radical SAM core spans 34-262 (GRVQLCALVN…TAQIRLSAGR (229 aa)). Cys49, Cys53, and Cys56 together coordinate [4Fe-4S] cluster. Positions 93, 125, 185, and 257 each coordinate [2Fe-2S] cluster.

The protein belongs to the radical SAM superfamily. Biotin synthase family. As to quaternary structure, homodimer. [4Fe-4S] cluster serves as cofactor. Requires [2Fe-2S] cluster as cofactor.

It carries out the reaction (4R,5S)-dethiobiotin + (sulfur carrier)-SH + 2 reduced [2Fe-2S]-[ferredoxin] + 2 S-adenosyl-L-methionine = (sulfur carrier)-H + biotin + 2 5'-deoxyadenosine + 2 L-methionine + 2 oxidized [2Fe-2S]-[ferredoxin]. It participates in cofactor biosynthesis; biotin biosynthesis; biotin from 7,8-diaminononanoate: step 2/2. Catalyzes the conversion of dethiobiotin (DTB) to biotin by the insertion of a sulfur atom into dethiobiotin via a radical-based mechanism. This Synechococcus sp. (strain JA-3-3Ab) (Cyanobacteria bacterium Yellowstone A-Prime) protein is Biotin synthase.